A 385-amino-acid polypeptide reads, in one-letter code: Homoserine O-succinyltransferase (385 aa).

One can recognise an AB hydrolase-1 domain in the interval 51 to 360; sequence NAVLICHALS…DSPHGHDAFL (310 aa). The active-site Nucleophile is the Ser-157. A substrate-binding site is contributed by Arg-227. Residues Asp-323 and His-356 contribute to the active site. Asp-357 lines the substrate pocket.

This sequence belongs to the AB hydrolase superfamily. MetX family. As to quaternary structure, homodimer.

The protein resides in the cytoplasm. The enzyme catalyses L-homoserine + succinyl-CoA = O-succinyl-L-homoserine + CoA. It participates in amino-acid biosynthesis; L-methionine biosynthesis via de novo pathway; O-succinyl-L-homoserine from L-homoserine: step 1/1. Transfers a succinyl group from succinyl-CoA to L-homoserine, forming succinyl-L-homoserine. The sequence is that of Homoserine O-succinyltransferase from Hahella chejuensis (strain KCTC 2396).